We begin with the raw amino-acid sequence, 124 residues long: Succinate dehydrogenase cytochrome b556 subunit (124 aa).

Residues methionine 1–leucine 29 are Cytoplasmic-facing. Residues serine 30–lysine 55 traverse the membrane as a helical segment. Topologically, residues tyrosine 56–cysteine 67 are periplasmic. The chain crosses the membrane as a helical span at residues isoleucine 68–isoleucine 88. Heme is bound at residue histidine 83. Residues arginine 89 to alanine 103 are Cytoplasmic-facing. Residues valine 104–valine 124 traverse the membrane as a helical segment.

This sequence belongs to the cytochrome b560 family. In terms of assembly, part of an enzyme complex containing four subunits: a flavoprotein, an iron-sulfur protein, plus two membrane-anchoring proteins, SdhC and SdhD. The complex can form homotrimers. Heme serves as cofactor.

The protein resides in the cell inner membrane. Its pathway is carbohydrate metabolism; tricarboxylic acid cycle. Membrane-anchoring subunit of succinate dehydrogenase (SDH). The chain is Succinate dehydrogenase cytochrome b556 subunit (sdhC) from Rickettsia typhi (strain ATCC VR-144 / Wilmington).